A 264-amino-acid polypeptide reads, in one-letter code: H-2 class II histocompatibility antigen, I-E beta chain (264 aa).

The first 31 residues, 1-31 (MVWLPRVPCVAAVILLLTVLSPPVALVRNSR), serve as a signal peptide directing secretion. The beta-1 stretch occupies residues 32–121 (PRFLEYSTSE…IFDNFLVPRR (90 aa)). At 32–225 (PRFLEYSTSE…KAQSTSAQNK (194 aa)) the chain is on the extracellular side. Intrachain disulfides connect Cys-42-Cys-106 and Cys-144-Cys-200. Asn-46 carries an N-linked (GlcNAc...) asparagine glycan. The tract at residues 122-215 (VEPTVTVYPT…SLTDPVTVEW (94 aa)) is beta-2. Residues 124–214 (PTVTVYPTKT…PSLTDPVTVE (91 aa)) enclose the Ig-like C1-type domain. The tract at residues 216–225 (KAQSTSAQNK) is connecting peptide. A helical transmembrane segment spans residues 226 to 248 (MLSGVGGFVLGLLFLGAGLFIYF). Topologically, residues 249–264 (RNQKGQSGLQPTGLLS) are cytoplasmic.

Belongs to the MHC class II family. In terms of processing, ubiquitinated in immature dendritic cells leading to down-regulation of MHC class II.

It is found in the membrane. This is H-2 class II histocompatibility antigen, I-E beta chain (H2-Eb1) from Mus musculus (Mouse).